Here is a 91-residue protein sequence, read N- to C-terminus: Elongation factor 1-beta (91 aa).

This sequence belongs to the EF-1-beta/EF-1-delta family.

In terms of biological role, promotes the exchange of GDP for GTP in EF-1-alpha/GDP, thus allowing the regeneration of EF-1-alpha/GTP that could then be used to form the ternary complex EF-1-alpha/GTP/AAtRNA. The polypeptide is Elongation factor 1-beta (Caldivirga maquilingensis (strain ATCC 700844 / DSM 13496 / JCM 10307 / IC-167)).